The chain runs to 143 residues: MEALVLVGHGSRLPYSKELLVKLAEKVKERNLFPIVEIGLMEFSEPTIPQAVKKAIEQGAKRIIVVPVFLAHGIHTTRDIPRLLGLIEDNHEHHHEHSHHHHHHHHHEHEKLEIPEDVEIIYREPIGADDRIVDIIIDRAFGR.

H9 functions as the Proton acceptor in the catalytic mechanism. Residue H9 coordinates Co(2+). H9 contacts Ni(2+). Residues E45 and 70–75 (LAHGIH) each bind substrate. H75 contributes to the Co(2+) binding site. Residue H75 participates in Ni(2+) binding.

It belongs to the CbiX family. CbiXS subfamily. As to quaternary structure, homotetramer; dimer of dimers.

The enzyme catalyses Co-sirohydrochlorin + 2 H(+) = sirohydrochlorin + Co(2+). It carries out the reaction Ni-sirohydrochlorin + 2 H(+) = sirohydrochlorin + Ni(2+). It participates in cofactor biosynthesis; adenosylcobalamin biosynthesis; cob(II)yrinate a,c-diamide from sirohydrochlorin (anaerobic route): step 1/10. In terms of biological role, catalyzes the insertion of Co(2+) into sirohydrochlorin as part of the anaerobic pathway to cobalamin biosynthesis. Involved in the biosynthesis of the unique nickel-containing tetrapyrrole coenzyme F430, the prosthetic group of methyl-coenzyme M reductase (MCR), which plays a key role in methanogenesis and anaerobic methane oxidation. Catalyzes the insertion of Ni(2+) into sirohydrochlorin to yield Ni-sirohydrochlorin. The chain is Sirohydrochlorin cobaltochelatase from Methanocaldococcus jannaschii (strain ATCC 43067 / DSM 2661 / JAL-1 / JCM 10045 / NBRC 100440) (Methanococcus jannaschii).